Reading from the N-terminus, the 421-residue chain is Testin (421 aa).

The PET domain occupies 92-199; the sequence is MILTNPVAAK…GDVKLPYEMG (108 aa). The interval 133–164 is disordered; the sequence is EKQPVAGSEGAQYRKKQLAKQLPAHDQDPSKC. Basic and acidic residues predominate over residues 155–164; it reads PAHDQDPSKC. LIM zinc-binding domains follow at residues 234 to 297, 299 to 359, and 362 to 421; these read YFCY…CDSE, PRCA…NHAV, and QGCH…KMMS.

The protein belongs to the prickle / espinas / testin family. As to quaternary structure, interacts via LIM domain 1 with ZYX. Interacts (via LIM domain 3) with ENAH and VASP. Interacts with ALKBH4, talin, actin, alpha-actinin, GRIP1 and PXN. Interacts (via LIM domain 2) with ACTL7A (via N-terminus). Heterodimer with ACTL7A; the heterodimer interacts with ENAH to form a heterotrimer.

It is found in the cytoplasm. The protein localises to the cell junction. It localises to the focal adhesion. In terms of biological role, scaffold protein that may play a role in cell adhesion, cell spreading and in the reorganization of the actin cytoskeleton. Plays a role in the regulation of cell proliferation. May act as a tumor suppressor. This Oryctolagus cuniculus (Rabbit) protein is Testin (TES).